Reading from the N-terminus, the 492-residue chain is Aerolysin-3 (492 aa).

Residues 1 to 23 form the signal peptide; that stretch reads MKKLKITGLSLIISGLLMAQAQA. 2 disulfide bridges follow: Cys42-Cys98 and Cys182-Cys187. Residues 68–84 are interaction with host N-linked glycan; that stretch reads WQISGLANGWVIMGPGY. Positions 256–288 are part of the transmembrane beta-barrel after proteolytic activation of the toxin and insertion into the host membrane; it reads YGLSEKVTTKNKFKWPLVGETELSIEIAANQSW. The interaction with glycans from host GPI-anchor stretch occupies residues 346-355; that stretch reads RWGGNAWYTH. Residues 446 to 492 constitute a propeptide that is removed on maturation; it reads AAASHSSRARNLSAGQGLRLEIPLDAQELSGLGFNNVSLSVTPAANQ.

The protein belongs to the aerolysin family. In terms of assembly, homodimer in solution; homoheptamer in the host membrane. After binding to GPI-anchored proteins in target membranes and proteolytic removal of the C-terminal propeptide, the protein assembles into a heptameric pre-pore complex. A further conformation change leads to insertion into the host membrane. Post-translationally, proteolytic cleavage and subsequent release of the propeptide trigger a major conformation change, leading to the formation of a heptameric pre-pore that then inserts into the host membrane.

The protein resides in the secreted. Its subcellular location is the host cell membrane. Secreted, cytolytic toxin that forms pores in host membranes after proteolytic removal of a C-terminal propeptide, leading to destruction of the membrane permeability barrier and cell death. The pores are formed by transmembrane beta-strands and are approximately 3 nm in diameter. This is Aerolysin-3 (ahh3) from Aeromonas hydrophila.